We begin with the raw amino-acid sequence, 205 residues long: Holliday junction resolvase RecU (205 aa).

Residues 1–26 (MIRYPNGKSYQPIQPIGTKKRISGES) are disordered. Mg(2+) is bound by residues threonine 86, aspartate 88, glutamate 101, and glutamine 120.

The protein belongs to the RecU family. Mg(2+) serves as cofactor.

Its subcellular location is the cytoplasm. It carries out the reaction Endonucleolytic cleavage at a junction such as a reciprocal single-stranded crossover between two homologous DNA duplexes (Holliday junction).. Its function is as follows. Endonuclease that resolves Holliday junction intermediates in genetic recombination. Cleaves mobile four-strand junctions by introducing symmetrical nicks in paired strands. Promotes annealing of linear ssDNA with homologous dsDNA. Required for DNA repair, homologous recombination and chromosome segregation. This Bacillus pumilus (strain SAFR-032) protein is Holliday junction resolvase RecU.